Consider the following 249-residue polypeptide: NH(3)-dependent NAD(+) synthetase (249 aa).

A Mg(2+)-binding site is contributed by Asp34. Arg110 serves as a coordination point for deamido-NAD(+). Thr130 is a binding site for ATP. Mg(2+) is bound at residue Glu135. The deamido-NAD(+) site is built by Lys143 and Asp150. Positions 159 and 181 each coordinate ATP. 232 to 233 (HK) contacts deamido-NAD(+).

The protein belongs to the NAD synthetase family. Homodimer.

It carries out the reaction deamido-NAD(+) + NH4(+) + ATP = AMP + diphosphate + NAD(+) + H(+). It participates in cofactor biosynthesis; NAD(+) biosynthesis; NAD(+) from deamido-NAD(+) (ammonia route): step 1/1. Its function is as follows. Catalyzes the ATP-dependent amidation of deamido-NAD to form NAD. Uses ammonia as a nitrogen source. This is NH(3)-dependent NAD(+) synthetase from Picrophilus torridus (strain ATCC 700027 / DSM 9790 / JCM 10055 / NBRC 100828 / KAW 2/3).